Here is a 98-residue protein sequence, read N- to C-terminus: MVQMSEGFRRKTRKKLSKHPRERGLYPITRALREFKEGEYVHIVIDPSVHKGMPHPRFHGRTGIVVGKQGRAFIVKVRDGGKYKQIIAYPQHLRPATA.

The disordered stretch occupies residues 1–22 (MVQMSEGFRRKTRKKLSKHPRE). Residues 10-21 (RKTRKKLSKHPR) are compositionally biased toward basic residues.

This sequence belongs to the eukaryotic ribosomal protein eL21 family.

This Methanocaldococcus jannaschii (strain ATCC 43067 / DSM 2661 / JAL-1 / JCM 10045 / NBRC 100440) (Methanococcus jannaschii) protein is Large ribosomal subunit protein eL21 (rpl21e).